We begin with the raw amino-acid sequence, 38 residues long: Large ribosomal subunit protein bL36 (38 aa).

The protein belongs to the bacterial ribosomal protein bL36 family.

This Wigglesworthia glossinidia brevipalpis protein is Large ribosomal subunit protein bL36.